We begin with the raw amino-acid sequence, 382 residues long: Phosphatidylglycerol--prolipoprotein diacylglyceryl transferase (382 aa).

A run of 3 helical transmembrane segments spans residues 18–38 (IQWY…MFVF), 53–73 (FFIF…SFVI), and 91–111 (LAIQ…FNFF). Residue arginine 162 participates in a 1,2-diacyl-sn-glycero-3-phospho-(1'-sn-glycerol) binding. 4 helical membrane-spanning segments follow: residues 213-233 (IPLF…IYFV), 243-263 (GTIG…LENF), 274-294 (ITTS…CQFI), and 302-322 (FWTY…TTLF).

It belongs to the Lgt family.

The protein resides in the cell membrane. It catalyses the reaction L-cysteinyl-[prolipoprotein] + a 1,2-diacyl-sn-glycero-3-phospho-(1'-sn-glycerol) = an S-1,2-diacyl-sn-glyceryl-L-cysteinyl-[prolipoprotein] + sn-glycerol 1-phosphate + H(+). Its pathway is protein modification; lipoprotein biosynthesis (diacylglyceryl transfer). Functionally, catalyzes the transfer of the diacylglyceryl group from phosphatidylglycerol to the sulfhydryl group of the N-terminal cysteine of a prolipoprotein, the first step in the formation of mature lipoproteins. The polypeptide is Phosphatidylglycerol--prolipoprotein diacylglyceryl transferase (Mycoplasma genitalium (strain ATCC 33530 / DSM 19775 / NCTC 10195 / G37) (Mycoplasmoides genitalium)).